The primary structure comprises 210 residues: Small heat shock protein hspG6 (210 aa).

Residues 34–210 (KTIIDKLPPM…YSNTIKININ (177 aa)) enclose the sHSP domain. Residues 93 to 151 (VIEKSTSSSTLDSKEDEPSIEEFEDDIKPKSKSDNTTVSTTTTATTKENKEDENKTKST) are disordered. The span at 126-138 (DNTTVSTTTTATT) shows a compositional bias: low complexity. The span at 139-151 (KENKEDENKTKST) shows a compositional bias: basic and acidic residues.

The protein belongs to the small heat shock protein (HSP20) family.

This is Small heat shock protein hspG6 (hspG6) from Dictyostelium discoideum (Social amoeba).